The sequence spans 452 residues: Diphthine methyltransferase (452 aa).

WD repeat units follow at residues 79–130 (PLVE…SHVL), 131–185 (EPLS…RPRL), 186–229 (QKVA…RVPG), 230–273 (KFLF…RNMK), 274–313 (QPLA…LNCQ), 314–403 (KAME…TEGM), and 404–448 (RKNG…HLWE). The residue at position 353 (S353) is a Phosphoserine. Residues 371–402 (SELPTPCHECREDNDGEGHARPQSGMKPLTEG) are disordered. A compositionally biased stretch (basic and acidic residues) spans 378–390 (HECREDNDGEGHA).

It belongs to the DPH7 family. In terms of assembly, interacts with INCA1.

The enzyme catalyses diphthine methyl ester-[translation elongation factor 2] + H2O = diphthine-[translation elongation factor 2] + methanol + H(+). It functions in the pathway protein modification; peptidyl-diphthamide biosynthesis. In terms of biological role, catalyzes the demethylation of diphthine methyl ester to form diphthine, an intermediate diphthamide biosynthesis, a post-translational modification of histidine which occurs in translation elongation factor 2 (EEF2) which can be ADP-ribosylated by diphtheria toxin and by Pseudomonas exotoxin A (Eta). The protein is Diphthine methyltransferase (DPH7) of Homo sapiens (Human).